The primary structure comprises 256 residues: Type III pantothenate kinase (256 aa).

6 to 13 contributes to the ATP binding site; the sequence is DAGNSRIK. Substrate contacts are provided by residues Y90 and 97–100; that span reads GSDR. Catalysis depends on D99, which acts as the Proton acceptor. T123 is a binding site for ATP. Position 187 (T187) interacts with substrate.

The protein belongs to the type III pantothenate kinase family. Homodimer. NH4(+) is required as a cofactor. K(+) serves as cofactor.

Its subcellular location is the cytoplasm. It carries out the reaction (R)-pantothenate + ATP = (R)-4'-phosphopantothenate + ADP + H(+). Its pathway is cofactor biosynthesis; coenzyme A biosynthesis; CoA from (R)-pantothenate: step 1/5. Functionally, catalyzes the phosphorylation of pantothenate (Pan), the first step in CoA biosynthesis. The sequence is that of Type III pantothenate kinase from Burkholderia mallei (strain ATCC 23344).